The chain runs to 273 residues: Mitochondrial distribution and morphology protein 12 (273 aa).

The SMP-LTD domain occupies 1–273 (MSIDFDWSKL…LVWPSYITIE (273 aa)). A disordered region spans residues 124–145 (LTSPIPESRPSTPMDNHQERDR).

The protein belongs to the MDM12 family. Component of the ER-mitochondria encounter structure (ERMES) or MDM complex, composed of mmm1, mdm10, mdm12 and mdm34. A mmm1 homodimer associates with one molecule of mdm12 on each side in a pairwise head-to-tail manner, and the SMP-LTD domains of mmm1 and mdm12 generate a continuous hydrophobic tunnel for phospholipid trafficking.

The protein localises to the mitochondrion outer membrane. It is found in the endoplasmic reticulum membrane. Functionally, component of the ERMES/MDM complex, which serves as a molecular tether to connect the endoplasmic reticulum (ER) and mitochondria. Components of this complex are involved in the control of mitochondrial shape and protein biogenesis, and function in nonvesicular lipid trafficking between the ER and mitochondria. Mdm12 is required for the interaction of the ER-resident membrane protein mmm1 and the outer mitochondrial membrane-resident beta-barrel protein mdm10. The mdm12-mmm1 subcomplex functions in the major beta-barrel assembly pathway that is responsible for biogenesis of all mitochondrial outer membrane beta-barrel proteins, and acts in a late step after the SAM complex. The mdm10-mdm12-mmm1 subcomplex further acts in the TOM40-specific pathway after the action of the mdm12-mmm1 complex. Essential for establishing and maintaining the structure of mitochondria and maintenance of mtDNA nucleoids. The sequence is that of Mitochondrial distribution and morphology protein 12 from Schizosaccharomyces pombe (strain 972 / ATCC 24843) (Fission yeast).